A 239-amino-acid chain; its full sequence is tRNA (guanine-N(7)-)-methyltransferase (239 aa).

4 residues coordinate S-adenosyl-L-methionine: Glu-69, Glu-94, Asp-121, and Asp-144. Asp-144 is a catalytic residue. Lys-148 is a substrate binding site. The interval 150–155 (RHNKRR) is interaction with RNA. Substrate is bound by residues Asp-180 and 217 to 220 (TKFE).

It belongs to the class I-like SAM-binding methyltransferase superfamily. TrmB family. As to quaternary structure, monomer.

The enzyme catalyses guanosine(46) in tRNA + S-adenosyl-L-methionine = N(7)-methylguanosine(46) in tRNA + S-adenosyl-L-homocysteine. The protein operates within tRNA modification; N(7)-methylguanine-tRNA biosynthesis. Its function is as follows. Catalyzes the formation of N(7)-methylguanine at position 46 (m7G46) in tRNA. The polypeptide is tRNA (guanine-N(7)-)-methyltransferase (Yersinia pestis (strain Pestoides F)).